A 187-amino-acid polypeptide reads, in one-letter code: Corticoliberin (187 aa).

An N-terminal signal peptide occupies residues 1–19 (MRLRLLVSAGMLLVALSSC). Positions 20-144 (LPCRALLSRG…HQGALERERR (125 aa)) are excised as a propeptide. Disordered stretches follow at residues 75–94 (AARL…SRPS) and 114–146 (QRSL…RRSE). Residues 117–129 (LDSRAEPAERGAE) are compositionally biased toward basic and acidic residues. At Ile-185 the chain carries Isoleucine amide.

It belongs to the sauvagine/corticotropin-releasing factor/urotensin I family. In terms of assembly, interacts (via C-terminus) with CRFR1 (via N-terminal extracellular domain). Expressed in parvocellular paraventricular nucleus of the hypothalamus and in medial accessory olivary nucleus.

It is found in the secreted. In terms of biological role, hormone regulating the release of corticotropin from pituitary gland. Induces NLRP6 in intestinal epithelial cells, hence may influence gut microbiota profile. This is Corticoliberin (Crh) from Mus musculus (Mouse).